We begin with the raw amino-acid sequence, 417 residues long: Serine hydroxymethyltransferase (417 aa).

(6S)-5,6,7,8-tetrahydrofolate is bound by residues Leu-121 and 125 to 127 (GHL). Residue Lys-229 is modified to N6-(pyridoxal phosphate)lysine. (6S)-5,6,7,8-tetrahydrofolate is bound at residue 355–357 (SPF).

The protein belongs to the SHMT family. Homodimer. The cofactor is pyridoxal 5'-phosphate.

Its subcellular location is the cytoplasm. It carries out the reaction (6R)-5,10-methylene-5,6,7,8-tetrahydrofolate + glycine + H2O = (6S)-5,6,7,8-tetrahydrofolate + L-serine. It functions in the pathway one-carbon metabolism; tetrahydrofolate interconversion. The protein operates within amino-acid biosynthesis; glycine biosynthesis; glycine from L-serine: step 1/1. Catalyzes the reversible interconversion of serine and glycine with tetrahydrofolate (THF) serving as the one-carbon carrier. This reaction serves as the major source of one-carbon groups required for the biosynthesis of purines, thymidylate, methionine, and other important biomolecules. Also exhibits THF-independent aldolase activity toward beta-hydroxyamino acids, producing glycine and aldehydes, via a retro-aldol mechanism. This is Serine hydroxymethyltransferase from Buchnera aphidicola subsp. Schizaphis graminum (strain Sg).